Reading from the N-terminus, the 175-residue chain is NADH-ubiquinone oxidoreductase chain 6 (175 aa).

A run of 6 helical transmembrane segments spans residues 1–21 (MMYI…GFSS), 24–44 (SPVY…GIIM), 51–71 (LGLV…GYTI), 87–107 (VVLS…VWLF), 113–133 (LVGF…GSFG), and 148–168 (YGFW…FIAI).

It belongs to the complex I subunit 6 family. In terms of assembly, core subunit of respiratory chain NADH dehydrogenase (Complex I) which is composed of 45 different subunits.

Its subcellular location is the mitochondrion inner membrane. The enzyme catalyses a ubiquinone + NADH + 5 H(+)(in) = a ubiquinol + NAD(+) + 4 H(+)(out). In terms of biological role, core subunit of the mitochondrial membrane respiratory chain NADH dehydrogenase (Complex I) which catalyzes electron transfer from NADH through the respiratory chain, using ubiquinone as an electron acceptor. Essential for the catalytic activity and assembly of complex I. This chain is NADH-ubiquinone oxidoreductase chain 6 (MT-ND6), found in Mammuthus primigenius (Siberian woolly mammoth).